A 31-amino-acid polypeptide reads, in one-letter code: GFNPCGETCQIDQTCHAPGCTCSIANICVRN.

Residues Gly-1 to Asn-31 constitute a cross-link (cyclopeptide (Gly-Asn)). 3 cysteine pairs are disulfide-bonded: Cys-5–Cys-20, Cys-9–Cys-22, and Cys-15–Cys-28.

In terms of processing, this is a cyclic peptide.

In terms of biological role, probably participates in a plant defense mechanism. This is Cyclotide psybry C from Psychotria brachyceras.